The primary structure comprises 98 residues: NADH-ubiquinone oxidoreductase chain 4L (98 aa).

The next 3 membrane-spanning stretches (helical) occupy residues 1–21, 26–46, and 59–79; these read MTHIMFTFSTAFMLGLSGLTF, LLSALLCLEGMMLSLFIALAM, and APLLLLALSACEAGLGLSLLV.

Belongs to the complex I subunit 4L family.

Its subcellular location is the mitochondrion membrane. The enzyme catalyses a ubiquinone + NADH + 5 H(+)(in) = a ubiquinol + NAD(+) + 4 H(+)(out). Its function is as follows. Core subunit of the mitochondrial membrane respiratory chain NADH dehydrogenase (Complex I) which catalyzes electron transfer from NADH through the respiratory chain, using ubiquinone as an electron acceptor. Part of the enzyme membrane arm which is embedded in the lipid bilayer and involved in proton translocation. This Polypterus ornatipinnis (Ornate bichir) protein is NADH-ubiquinone oxidoreductase chain 4L (MT-ND4L).